The chain runs to 528 residues: Coiled-coil domain-containing protein 116 (528 aa).

The disordered stretch occupies residues 43–68 (GHVPHPPSTCGSSALQNQRRNKRHPQ). Polar residues predominate over residues 51–60 (TCGSSALQNQ). The stretch at 81 to 104 (HVLDSLETVVEKATERMAAMKTEA) forms a coiled coil. Disordered regions lie at residues 335–444 (PLFP…RQRA) and 497–528 (SSSP…THHS). A compositionally biased stretch (polar residues) spans 363–378 (PTNSGQPHPTVSSPKT). Serine 389 bears the Phosphoserine mark. Basic and acidic residues predominate over residues 419-429 (HSREKEPDSDP). The segment covering 434–443 (PPVSLSSRQR) has biased composition (polar residues). The segment covering 497–510 (SSSPSSLCPEVTSS) has biased composition (low complexity).

It is found in the cytoplasm. Its subcellular location is the cytoskeleton. It localises to the microtubule organizing center. The protein resides in the centrosome. The sequence is that of Coiled-coil domain-containing protein 116 (CCDC116) from Macaca fascicularis (Crab-eating macaque).